Here is a 244-residue protein sequence, read N- to C-terminus: Small ribosomal subunit protein uS2 (244 aa).

This sequence belongs to the universal ribosomal protein uS2 family.

The chain is Small ribosomal subunit protein uS2 from Psychromonas ingrahamii (strain DSM 17664 / CCUG 51855 / 37).